We begin with the raw amino-acid sequence, 215 residues long: Ependymin-1 (215 aa).

An N-terminal signal peptide occupies residues 1 to 20; it reads MHTVKLLCVVFSCLCAVAWA. 2 N-linked (GlcNAc...) asparagine glycosylation sites follow: Asn-71 and Asn-94.

This sequence belongs to the ependymin family. In terms of assembly, forms disulfide-linked dimers. Different glycosylation variants are known as EPD-beta and EPD-gamma. Post-translationally, binds calcium through the terminal sialic acids. EPDs are synthesized in the meninx and secreted in the cerebrospinal fluid.

The protein resides in the secreted. Its function is as follows. May play a role in neural plasticity. May be involved during axon regeneration. The polypeptide is Ependymin-1 (epd1) (Carassius auratus (Goldfish)).